A 49-amino-acid polypeptide reads, in one-letter code: Large ribosomal subunit protein bL33C (49 aa).

It belongs to the bacterial ribosomal protein bL33 family.

In Bacillus pumilus (strain SAFR-032), this protein is Large ribosomal subunit protein bL33C.